The following is a 331-amino-acid chain: Phenylalanine--tRNA ligase alpha subunit (331 aa).

A Mg(2+)-binding site is contributed by Glu256.

It belongs to the class-II aminoacyl-tRNA synthetase family. Phe-tRNA synthetase alpha subunit type 1 subfamily. As to quaternary structure, tetramer of two alpha and two beta subunits. It depends on Mg(2+) as a cofactor.

It localises to the cytoplasm. The enzyme catalyses tRNA(Phe) + L-phenylalanine + ATP = L-phenylalanyl-tRNA(Phe) + AMP + diphosphate + H(+). This chain is Phenylalanine--tRNA ligase alpha subunit, found in Colwellia psychrerythraea (strain 34H / ATCC BAA-681) (Vibrio psychroerythus).